We begin with the raw amino-acid sequence, 309 residues long: Aspartate carbamoyltransferase catalytic subunit (309 aa).

Carbamoyl phosphate-binding residues include Arg55 and Thr56. Lys85 provides a ligand contact to L-aspartate. Arg106, His135, and Gln138 together coordinate carbamoyl phosphate. Positions 168 and 230 each coordinate L-aspartate. Positions 268 and 269 each coordinate carbamoyl phosphate.

Belongs to the aspartate/ornithine carbamoyltransferase superfamily. ATCase family. As to quaternary structure, heterododecamer (2C3:3R2) of six catalytic PyrB chains organized as two trimers (C3), and six regulatory PyrI chains organized as three dimers (R2).

The enzyme catalyses carbamoyl phosphate + L-aspartate = N-carbamoyl-L-aspartate + phosphate + H(+). It participates in pyrimidine metabolism; UMP biosynthesis via de novo pathway; (S)-dihydroorotate from bicarbonate: step 2/3. Its function is as follows. Catalyzes the condensation of carbamoyl phosphate and aspartate to form carbamoyl aspartate and inorganic phosphate, the committed step in the de novo pyrimidine nucleotide biosynthesis pathway. This is Aspartate carbamoyltransferase catalytic subunit from Wigglesworthia glossinidia brevipalpis.